The following is a 190-amino-acid chain: E3 ubiquitin-protein ligase RNF183 (190 aa).

Topologically, residues 1 to 159 (MSEPQGQELR…RECVRNPHFR (159 aa)) are cytoplasmic. The RING-type zinc finger occupies 13–60 (CPVCWNPFNNTFHTPKVLDCCHSFCVECLAHLSLVTPARRRLLCPLCR). Residues 160-180 (IFAYLMAVILSVTLLLIFSIF) form a helical; Anchor for type IV membrane protein membrane-spanning segment. The Lumenal portion of the chain corresponds to 181 to 190 (WTKQFFWGMG).

As to quaternary structure, interacts with FATE1. Interacts with SEC16A. Interacts with BCL2L1. In terms of processing, autoubiquitinated (in vitro). Highly expressed in the kidney and testis.

The protein resides in the endoplasmic reticulum membrane. The protein localises to the endoplasmic reticulum. It localises to the golgi apparatus. Its subcellular location is the cis-Golgi network membrane. It is found in the lysosome membrane. It catalyses the reaction S-ubiquitinyl-[E2 ubiquitin-conjugating enzyme]-L-cysteine + [acceptor protein]-L-lysine = [E2 ubiquitin-conjugating enzyme]-L-cysteine + N(6)-ubiquitinyl-[acceptor protein]-L-lysine.. It participates in protein modification; protein ubiquitination. Functionally, acts as an E3 ubiquitin ligase catalyzing the covalent attachment of ubiquitin moieties onto substrate proteins. Triggers apoptosis in response to prolonged ER stress by mediating the polyubiquitination and subsequent proteasomal degradation of BCL2L1. May collaborate with FATE1 to restrain BIK protein levels thus regulating apoptotic signaling. The protein is E3 ubiquitin-protein ligase RNF183 (Rnf183) of Mus musculus (Mouse).